The following is an 88-amino-acid chain: Large ribosomal subunit protein eL34 (88 aa).

The protein belongs to the eukaryotic ribosomal protein eL34 family.

The protein is Large ribosomal subunit protein eL34 of Methanobrevibacter smithii (strain ATCC 35061 / DSM 861 / OCM 144 / PS).